The primary structure comprises 160 residues: Small ribosomal subunit protein uS17m (160 aa).

It belongs to the universal ribosomal protein uS17 family. As to quaternary structure, component of the mitochondrial ribosome small subunit (28S) which comprises a 12S rRNA and about 30 distinct proteins.

It localises to the mitochondrion. The polypeptide is Small ribosomal subunit protein uS17m (mrps-17) (Caenorhabditis elegans).